Reading from the N-terminus, the 138-residue chain is Small ribosomal subunit protein uS11c (138 aa).

The protein belongs to the universal ribosomal protein uS11 family. In terms of assembly, part of the 30S ribosomal subunit.

The protein localises to the plastid. Its subcellular location is the chloroplast. This is Small ribosomal subunit protein uS11c from Illicium oligandrum (Star anise).